We begin with the raw amino-acid sequence, 318 residues long: Pyrroline-5-carboxylate reductase ucsG (318 aa).

Belongs to the pyrroline-5-carboxylate reductase family.

Its pathway is mycotoxin biosynthesis. In terms of biological role, pyrroline-5-carboxylate reductase; part of the gene cluster that mediates the biosynthesis of UCS1025A, a member of the pyrrolizidinone family that acts as a strong telomerase inhibitor and displays potent antibacterial and antitumor properties. These compounds share a hemiaminal-containing pyrrolizidinone core fused with a gamma-lactone, giving a furopyrrolizidine that is connected to a decalin fragment. The polyketide synthase module (PKS) of the PKS-NRPS ucsA is responsible for the synthesis of the polyketide backbone via the condensation of an acetyl-CoA starter unit with 6 malonyl-CoA units. The downstream nonribosomal peptide synthetase (NRPS) module then amidates the carboxyl end of the polyketide with a 2S,3S-methylproline derived from L-isoleucine by the 2-oxoglutarate-dependent dioxygenase ucsF which converts L-isoleucine to (4S,5S)-4-methylpyrroline-5-carboxylate that is further converted to 2S,3S-methylproline by the pyrroline-5-carboxylate reductase ucsG. Reductive release of the completed aminoacyl polyketide from the assembly line can form the 3-pyrrolin-2-one structure via an intramolecular Knoevenagel reaction. Because ucsA lacks a designated enoylreductase (ER) domain, the required activity is provided the enoyl reductase ucsL. This keto acyclic precursor is the substrate of the Diels-Alderase ucsH, that catalyzes the Diels-Alder cycloaddition. Oxidation of the 3S-methyl group to a carboxylate by the cytochrome P450 monooxygenase ucsK allows an oxa-Michael cyclization that might involve the reductase/dehydrogenase ucsI and which furnishes the furopyrrolizidine. The oxidase ucsJ likely plays a critical role in stereoselective reduction of the C5-C6 double bond to afford the required R-configured carboxylate group. Further enolization and oxidation at C5 by an unidentified enzyme affords the last intermediate that can undergo oxa-Michael cyclization to yield UCS1025A. This Acremonium sp protein is Pyrroline-5-carboxylate reductase ucsG.